The sequence spans 416 residues: Squalene synthase (416 aa).

Residues Arg-52 and Arg-77 each coordinate NADP(+). 3 residues coordinate Mg(2+): Asp-80, Glu-83, and Asp-84. Arg-218 is an NADP(+) binding site. Residues 284–304 form a helical membrane-spanning segment; it reads SVFNFCAIPQVMAIATLAACY. NADP(+) contacts are provided by Lys-315 and Arg-317. A helical transmembrane segment spans residues 384–404; it reads PIYLSFIMLLAALSWQYLSTL.

Belongs to the phytoene/squalene synthase family. Requires Mg(2+) as cofactor.

The protein resides in the endoplasmic reticulum membrane. The catalysed reaction is 2 (2E,6E)-farnesyl diphosphate + NADPH + H(+) = squalene + 2 diphosphate + NADP(+). It catalyses the reaction 2 (2E,6E)-farnesyl diphosphate + NADH + H(+) = squalene + 2 diphosphate + NAD(+). It carries out the reaction presqualene diphosphate + NADH + H(+) = squalene + diphosphate + NAD(+). The enzyme catalyses presqualene diphosphate + NADPH + H(+) = squalene + diphosphate + NADP(+). The catalysed reaction is 2 (2E,6E)-farnesyl diphosphate = presqualene diphosphate + diphosphate. It functions in the pathway terpene metabolism; lanosterol biosynthesis; lanosterol from farnesyl diphosphate: step 1/3. Catalyzes the condensation of 2 farnesyl pyrophosphate (FPP) moieties to form squalene. Proceeds in two distinct steps. In the first half-reaction, two molecules of FPP react to form the stable presqualene diphosphate intermediate (PSQPP), with concomitant release of a proton and a molecule of inorganic diphosphate. In the second half-reaction, PSQPP undergoes heterolysis, isomerization, and reduction with NADPH or NADH to form squalene. It is the first committed enzyme of the sterol biosynthesis pathway. This Mus musculus (Mouse) protein is Squalene synthase (Fdft1).